A 488-amino-acid chain; its full sequence is Proline--tRNA ligase (488 aa).

The protein belongs to the class-II aminoacyl-tRNA synthetase family. ProS type 3 subfamily. As to quaternary structure, homodimer.

The protein localises to the cytoplasm. The catalysed reaction is tRNA(Pro) + L-proline + ATP = L-prolyl-tRNA(Pro) + AMP + diphosphate. Functionally, catalyzes the attachment of proline to tRNA(Pro) in a two-step reaction: proline is first activated by ATP to form Pro-AMP and then transferred to the acceptor end of tRNA(Pro). This chain is Proline--tRNA ligase, found in Symbiobacterium thermophilum (strain DSM 24528 / JCM 14929 / IAM 14863 / T).